Consider the following 152-residue polypeptide: Protein-export protein SecB (152 aa).

It belongs to the SecB family. In terms of assembly, homotetramer, a dimer of dimers. One homotetramer interacts with 1 SecA dimer.

It localises to the cytoplasm. In terms of biological role, one of the proteins required for the normal export of preproteins out of the cell cytoplasm. It is a molecular chaperone that binds to a subset of precursor proteins, maintaining them in a translocation-competent state. It also specifically binds to its receptor SecA. The protein is Protein-export protein SecB of Rickettsia akari (strain Hartford).